The following is a 212-amino-acid chain: Large ribosomal subunit protein uL3 (212 aa).

Residues 134–155 (RNSHGNSLSHRAPGSIGQNQSP) are disordered. Position 153 is an N5-methylglutamine (Q153).

Belongs to the universal ribosomal protein uL3 family. In terms of assembly, part of the 50S ribosomal subunit. Forms a cluster with proteins L14 and L19. Methylated by PrmB.

One of the primary rRNA binding proteins, it binds directly near the 3'-end of the 23S rRNA, where it nucleates assembly of the 50S subunit. In Pseudoalteromonas atlantica (strain T6c / ATCC BAA-1087), this protein is Large ribosomal subunit protein uL3.